The following is a 164-amino-acid chain: UPF0304 protein KPK_1463 (164 aa).

This sequence belongs to the UPF0304 family.

The protein is UPF0304 protein KPK_1463 of Klebsiella pneumoniae (strain 342).